Consider the following 465-residue polypeptide: Cysteine--tRNA ligase (465 aa).

A Zn(2+)-binding site is contributed by Cys28. Residues Pro30–Asn40 carry the 'HIGH' region motif. Zn(2+)-binding residues include Cys208, His233, and Glu237. Positions Lys265–Ser269 match the 'KMSKS' region motif. Lys268 provides a ligand contact to ATP.

This sequence belongs to the class-I aminoacyl-tRNA synthetase family. In terms of assembly, monomer. It depends on Zn(2+) as a cofactor.

It is found in the cytoplasm. The catalysed reaction is tRNA(Cys) + L-cysteine + ATP = L-cysteinyl-tRNA(Cys) + AMP + diphosphate. This chain is Cysteine--tRNA ligase, found in Exiguobacterium sibiricum (strain DSM 17290 / CCUG 55495 / CIP 109462 / JCM 13490 / 255-15).